The sequence spans 230 residues: UPF0173 metal-dependent hydrolase SPO2976 (230 aa).

This sequence belongs to the UPF0173 family.

The sequence is that of UPF0173 metal-dependent hydrolase SPO2976 from Ruegeria pomeroyi (strain ATCC 700808 / DSM 15171 / DSS-3) (Silicibacter pomeroyi).